A 184-amino-acid polypeptide reads, in one-letter code: ATP synthase subunit b, chloroplastic (184 aa).

Residues 27 to 49 form a helical membrane-spanning segment; it reads LATNPINLSVVLGVLVFFGKGVL.

It belongs to the ATPase B chain family. As to quaternary structure, F-type ATPases have 2 components, F(1) - the catalytic core - and F(0) - the membrane proton channel. F(1) has five subunits: alpha(3), beta(3), gamma(1), delta(1), epsilon(1). F(0) has four main subunits: a(1), b(1), b'(1) and c(10-14). The alpha and beta chains form an alternating ring which encloses part of the gamma chain. F(1) is attached to F(0) by a central stalk formed by the gamma and epsilon chains, while a peripheral stalk is formed by the delta, b and b' chains.

The protein resides in the plastid. The protein localises to the chloroplast thylakoid membrane. Its function is as follows. F(1)F(0) ATP synthase produces ATP from ADP in the presence of a proton or sodium gradient. F-type ATPases consist of two structural domains, F(1) containing the extramembraneous catalytic core and F(0) containing the membrane proton channel, linked together by a central stalk and a peripheral stalk. During catalysis, ATP synthesis in the catalytic domain of F(1) is coupled via a rotary mechanism of the central stalk subunits to proton translocation. In terms of biological role, component of the F(0) channel, it forms part of the peripheral stalk, linking F(1) to F(0). This chain is ATP synthase subunit b, chloroplastic, found in Phaseolus vulgaris (Kidney bean).